A 349-amino-acid chain; its full sequence is MIEFDNLTYLHGKPQGTGLLKANPEDFVVVEDLGFEPDGEGEHILVRILKNGCNTRFVADALAKFLKIHAREVSFAGQKDKHAVTEQWLCARVPGKEMPDLSAFQLEGCQVLEYARHKRKLRLGALKGNAFTLVLREVSNRDDVEQRLIDICVKGVPNYFGAQRFGIGGSNLQGAQRWAQTNTPVRDRNKRSFWLSAARSALFNQIVAERLKKADVNQVVDGDALQLAGRGSWFVATTEELAELQRRVNDKELMITAALPGSGEWGTQREALAFEQAAVAAETELQALLVREKVEAARRAMLLYPQQLSWNWWDDVTVEIRFWLPAGSFATSVVRELINTTGDYAHIAE.

Phe-27 provides a ligand contact to substrate. The active-site Nucleophile is Asp-80. Asn-129 is a substrate binding site. The TRUD domain maps to Gly-155–Leu-303. Phe-329 contacts substrate.

Belongs to the pseudouridine synthase TruD family.

It carries out the reaction uridine(13) in tRNA = pseudouridine(13) in tRNA. Responsible for synthesis of pseudouridine from uracil-13 in transfer RNAs. This Escherichia coli (strain K12 / MC4100 / BW2952) protein is tRNA pseudouridine synthase D.